Consider the following 426-residue polypeptide: Enolase (426 aa).

Q163 provides a ligand contact to (2R)-2-phosphoglycerate. Residue E205 is the Proton donor of the active site. Mg(2+)-binding residues include D242, E285, and D312. (2R)-2-phosphoglycerate is bound by residues K337, R366, S367, and K388. K337 acts as the Proton acceptor in catalysis.

Belongs to the enolase family. Requires Mg(2+) as cofactor.

The protein resides in the cytoplasm. Its subcellular location is the secreted. It localises to the cell surface. It catalyses the reaction (2R)-2-phosphoglycerate = phosphoenolpyruvate + H2O. Its pathway is carbohydrate degradation; glycolysis; pyruvate from D-glyceraldehyde 3-phosphate: step 4/5. Its function is as follows. Catalyzes the reversible conversion of 2-phosphoglycerate (2-PG) into phosphoenolpyruvate (PEP). It is essential for the degradation of carbohydrates via glycolysis. The sequence is that of Enolase from Rhodospirillum centenum (strain ATCC 51521 / SW).